The primary structure comprises 144 residues: Large ribosomal subunit protein uL15 (144 aa).

The interval 1-54 (MRLNTLSPAPGRVSAKKRVGRGIGSGLGKTAGRGHKGLKSRSGGSVKPGFEGGQ) is disordered. A compositionally biased stretch (gly residues) spans 21 to 31 (RGIGSGLGKTA).

This sequence belongs to the universal ribosomal protein uL15 family. In terms of assembly, part of the 50S ribosomal subunit.

In terms of biological role, binds to the 23S rRNA. This Saccharophagus degradans (strain 2-40 / ATCC 43961 / DSM 17024) protein is Large ribosomal subunit protein uL15.